Consider the following 274-residue polypeptide: Protein A11 homolog (274 aa).

Positions 106–136 form a coiled coil; it reads DDNKRVHLLEQEIAELRKKKTKSKNLLDFTN.

Belongs to the poxviridae A11 family. In terms of assembly, homomultimer. Interacts with A32. Phosphorylated by a F10-independent mechanism.

It is found in the host cytoplasm. In terms of biological role, required for viral crescent formation early during virus morphogenesis. The protein is Protein A11 homolog of Fowlpox virus (strain NVSL) (FPV).